Consider the following 475-residue polypeptide: Sulfate adenylyltransferase subunit 1 (475 aa).

The tr-type G domain occupies 25–239 (KSLLRFLTCG…EVLETVEIQR (215 aa)). The tract at residues 34-41 (GSVDDGKS) is G1. 34 to 41 (GSVDDGKS) lines the GTP pocket. Residues 92–96 (GITID) form a G2 region. A G3 region spans residues 113 to 116 (DTPG). GTP-binding positions include 113 to 117 (DTPGH) and 168 to 171 (NKMD). The G4 stretch occupies residues 168–171 (NKMD). Positions 206-208 (SAL) are G5.

This sequence belongs to the TRAFAC class translation factor GTPase superfamily. Classic translation factor GTPase family. CysN/NodQ subfamily. Heterodimer composed of CysD, the smaller subunit, and CysN.

It carries out the reaction sulfate + ATP + H(+) = adenosine 5'-phosphosulfate + diphosphate. It participates in sulfur metabolism; hydrogen sulfide biosynthesis; sulfite from sulfate: step 1/3. Its function is as follows. With CysD forms the ATP sulfurylase (ATPS) that catalyzes the adenylation of sulfate producing adenosine 5'-phosphosulfate (APS) and diphosphate, the first enzymatic step in sulfur assimilation pathway. APS synthesis involves the formation of a high-energy phosphoric-sulfuric acid anhydride bond driven by GTP hydrolysis by CysN coupled to ATP hydrolysis by CysD. This Escherichia coli O17:K52:H18 (strain UMN026 / ExPEC) protein is Sulfate adenylyltransferase subunit 1.